Here is a 236-residue protein sequence, read N- to C-terminus: NEP1-interacting protein 1 (236 aa).

The Lumenal, thylakoid segment spans residues 1–44 (MASSRFQSGFCPISSCPSLENFIERIKDACRFTLSAVLGTILSA). Residues 45–65 (VLTFFFALVGTLLGALTGALI) form a helical membrane-spanning segment. The Stromal portion of the chain corresponds to 66–78 (GQETESGFIRGAA). Residues 79–99 (VGAISGAVFSIEVFESSLVLW) form a helical membrane-spanning segment. Residues 100–104 (KSNES) lie on the Lumenal, thylakoid side of the membrane. Residues 105–125 (RFGCLLYLIDVIVSLISGRLV) form a helical membrane-spanning segment. Residues 126–236 (RERIGPAMLS…GSCPMCRRDL (111 aa)) lie on the Stromal side of the membrane. The segment at 191-233 (CSVCLQDFQLGETVRSLPHCHHMFHLPCIDNWLFRHGSCPMCR) adopts an RING-type; atypical zinc-finger fold.

This sequence belongs to the RING-type zinc finger family. NIP subfamily. Interacts with RPOT2.

Its subcellular location is the plastid. The protein localises to the chloroplast thylakoid membrane. Intrinsic thylakoid membrane protein that fixes RPOT2 on the stromal side of the thylakoid membrane. This Arabidopsis thaliana (Mouse-ear cress) protein is NEP1-interacting protein 1 (NIP1).